Reading from the N-terminus, the 345-residue chain is Heat stress transcription factor A-4c (345 aa).

A DNA-binding region spans residues 11–105 (LPPFLTKTYE…LMKNIHRRKP (95 aa)). Residues 119 to 185 (PLTESERRSM…SIVAYVSQVL (67 aa)) form a hydrophobic repeat HR-A/B region. The short motif at 199–203 (RRKRR) is the Nuclear localization signal element. The AHA1 motif lies at 226 to 235 (LTFWENLVSE). The segment at 240–329 (SGLQSSSMDH…NGNKIGNQRT (90 aa)) is disordered. Residues 274–283 (PPVTVTAPAP) are compositionally biased toward low complexity. An AHA2 motif is present at residues 289–298 (DDFWEQCLTE). Polar residues-rich tracts occupy residues 296-308 (LTENPGSTEQQEV) and 317-329 (NDNNGNKIGNQRT).

The protein belongs to the HSF family. Class A subfamily. Homotrimer. In terms of processing, exhibits temperature-dependent phosphorylation. Expressed in roots, seedlings and at lower levels in leaves.

The protein localises to the nucleus. Its function is as follows. Transcriptional activator that specifically binds DNA sequence 5'-AGAAnnTTCT-3' known as heat shock promoter elements (HSE). May be involved in general response to auxin. This Arabidopsis thaliana (Mouse-ear cress) protein is Heat stress transcription factor A-4c (HSFA4C).